Here is a 241-residue protein sequence, read N- to C-terminus: Triosephosphate isomerase (241 aa).

Substrate is bound at residue 9–11 (NWK). The active-site Electrophile is H96. E165 functions as the Proton acceptor in the catalytic mechanism. Substrate contacts are provided by residues G171, S204, and 225–226 (GG).

It belongs to the triosephosphate isomerase family. As to quaternary structure, homodimer.

It localises to the cytoplasm. It carries out the reaction D-glyceraldehyde 3-phosphate = dihydroxyacetone phosphate. It functions in the pathway carbohydrate biosynthesis; gluconeogenesis. It participates in carbohydrate degradation; glycolysis; D-glyceraldehyde 3-phosphate from glycerone phosphate: step 1/1. Involved in the gluconeogenesis. Catalyzes stereospecifically the conversion of dihydroxyacetone phosphate (DHAP) to D-glyceraldehyde-3-phosphate (G3P). This chain is Triosephosphate isomerase, found in Prochlorococcus marinus subsp. pastoris (strain CCMP1986 / NIES-2087 / MED4).